A 109-amino-acid chain; its full sequence is MTALPARGEVWWCEMAEIGRRPVVVLSRDAAIPRLRRALVAPCTTTIRGLASEVVLEPGSDPIPRRSAVNLDSVESVSVAVLVNRLGRLADIRMRAICTALEVAVDCSR.

The protein belongs to the PemK/MazF family. Forms a complex with cognate antitoxin MazE5.

Toxic component of a type II toxin-antitoxin (TA) system. Upon expression in M.smegmatis inhibits colony formation. Its toxic effect is neutralized by coexpression with cognate antitoxin MazE5. Probably an endoribonuclease. The protein is Probable endoribonuclease MazF5 (mazF5) of Mycobacterium tuberculosis (strain ATCC 25618 / H37Rv).